The sequence spans 438 residues: Prenyltransferase malE (438 aa).

Glu-92 lines the substrate pocket. Positions 106, 192, 194, 259, 261, 346, and 411 each coordinate dimethylallyl diphosphate.

Belongs to the tryptophan dimethylallyltransferase family.

The catalysed reaction is (S)-3-(indol-3-ylmethyl)-6,7,8,8a-tetrahydropyrrolo[1,2-a]pyrazin-1-one + dimethylallyl diphosphate = (S)-3-{[2-(1,1-dimethylallyl)-indol-3-yl]methyl}-6,7,8,8a-tetrahydropyrrolo[1,2-a]pyrazin-1-one + diphosphate. The enzyme catalyses 1-hydroxy-3-(indol-3-ylmethyl)-6H,7H,8H-5lambda(5)-pyrrolo[1,2-a]pyrazine + dimethylallyl diphosphate = 1-hydroxy-3-{[2-(1,1-dimethylallyl)-indol-3-yl]methyl}-6H,7H,8H-5lambda(5)-pyrrolo[1,2-a]pyrazine + diphosphate. It participates in alkaloid biosynthesis. Functionally, prenyltransferase; part of the gene cluster that mediates the biosynthesis of malbrancheamide, a dichlorinated fungal indole alkaloid that belongs to a family of natural products containing a characteristic bicyclo[2.2.2]diazaoctane core. The first step of malbrancheamide biosynthesis involves coupling of L-proline and L-tryptophan by malG, a bimodular NRPS, to produce L-Pro-L-Trp aldehyde through reductive offloading. This compound undergoes spontaneous cyclization and dehydration to give a dienamine which is reverse prenylated at C-2 by malE. The other prenyltransferase present in the cluster, malB, displays modest activity, suggesting that may be a redundant gene in the pathway. Subsequently, a [4+2] Diels-Alder cyclo-addition catalyzed by the bifunctional enzyme malC forms the characteristic bicyclo[2.2.2]diazaoctane ring of premalbrancheamid. Finally, the flavin-dependent halogenase malA catalyzes the iterative dichlorination of the indole ring of premalbrancheamide to yield C-9 monochlorinated malbrancheamide B, C-8 monochlorinated isomalbrancheamide B, and dichlorinated malbrancheamide. MalA is also able to brominate premalbrancheamide at C-9 to yield malbrancheamide C, and, to a lesser extend, at C-8 to yield isomalbrancheamide C. Finally, malA can brominate C-9 monochlorinated malbrancheamide B at C-8 to yield malbrancheamide D, or C-8 monochlorinated isomalbrancheamide B at C-9 to produce isomalbrancheamide D. In Malbranchea aurantiaca, this protein is Prenyltransferase malE.